Reading from the N-terminus, the 1140-residue chain is MNQEEDTVNLQIFVPELNVRKFLAVTQNDFIWDVKRKLLATLPQALPQAFNYGLFLPPCDGRAGKFLLEDRTIRDYPFTDCVPYLELKYKKRVYKMLNLDEKQLKAMHTKGQLKKFMDYVQQKNNEKVEKMCSQGLDANFHDAQGETPLTLAAGIPNNRAVIVSLIGGGAHVDFRNSEGQTAMHKAAFLSSFENVKTLIELGASPNYRDPIGLTPLYYNMLTADSNDQVAEILLREAADIGVTDMHGNHEIHQACKNGLTKHVEHLLYFGGQIDAENVNGNSPLHVCAVNNRPECARVLLFRGADHLAVNKQGQTALHVSHIVGNPGVADVVQAHNPKSSVPYRGTPQYSTRRRLSSTITRRRSMSQSSICSQDVYRTPQSVRKGPMSAAPSPSPSRSSRTTITPSEYGTMRRSGMDSMRGGGMIAAGHETNIARILVIPRGVKGFGFILRGAKHVAMPLNFEPTAQVPALQFFEGVDMSGMAVRAGLRPGDYLLEIDGIDVRRCSHDEVVEFIQQAGDTITLKVITVDVADMSRGGTIVHRPPTASSRHSLVFTPTPSAIYSSTKASSVYRMRFDTHDAHGVDYYAPNEIRNAYSESRHASVRQRPGSGRRISAAELENLMVRQRVPSVQGSPYQMQYDQESLNGGYSSKKYNSVSDMKRRKGQRNVVASSAGLNRSTFEQAAPTTSTFEYNCSSRSTPQLSRMDSFDSFDDEDEMPAPPPASYISPDLQRDSSMQRSEYSRPFRPTSRPKTPPPPPPMQHQNHQNHQYQQQHPSLPRSASTPQPIQQQQSSIPPPPPPPPPPHCEPTMVHVEFTPPSTSSVPPPPPPLPPISSGAPPPPPPPPPGGLMHVAASAPVLMSNSKGISADALKSVQLKKAEPRETSAASVSNNNNNNNNSTTDFQMDLKNALAKRRSKVAHDVDEDEERESRFEGLSLRETVRENVVERGKGIQNIGIVNKKDSGYTSSRTSLEPSESEEKDHRPHFSLDHSPNVQRVTLISQHLEDNYGQKDNMSVASSSTASSSSTVDLTKPGCFVVPSHVIPPVDYDDDPDSGTGDSDGEIRCSEISFEHKKVDVWSVDDVIGWLSSLHLSEYTPAFRSQRINGRCLRQCDRSRFTQLGVTRIAHRQIIESALRGLLQ.

ANK repeat units follow at residues 144–174 (QGET…HVDF), 178–207 (EGQT…SPNY), 211–242 (IGLT…DIGV), 246–275 (HGNH…QIDA), 279–309 (NGNS…HLAV), and 312–341 (QGQT…KSSV). Residues 337–412 (PKSSVPYRGT…ITPSEYGTMR (76 aa)) form a disordered region. Residues 351–364 (TRRRLSSTITRRRS) are compositionally biased toward basic residues. Over residues 388 to 412 (SAAPSPSPSRSSRTTITPSEYGTMR) the composition is skewed to low complexity. The 94-residue stretch at 436 to 529 (ILVIPRGVKG…TITLKVITVD (94 aa)) folds into the PDZ domain. Polar residues-rich tracts occupy residues 640–657 (DQES…NSVS) and 687–704 (TSTF…QLSR). Disordered stretches follow at residues 640-673 (DQES…ASSA), 687-856 (TSTF…AASA), 875-902 (QLKK…STTD), 961-993 (KDSG…HSPN), and 1008-1028 (YGQK…SSTV). Composition is skewed to low complexity over residues 761–775 (QHQN…QQHP) and 784–793 (PQPIQQQQSS). Composition is skewed to pro residues over residues 794-806 (IPPP…PPHC) and 823-847 (VPPP…PPPG). The span at 964–974 (GYTSSRTSLEP) shows a compositional bias: polar residues. Over residues 977–988 (SEEKDHRPHFSL) the composition is skewed to basic and acidic residues. Over residues 1015–1028 (SVASSSTASSSSTV) the composition is skewed to low complexity. One can recognise an SAM domain in the interval 1078 to 1140 (WSVDDVIGWL…IESALRGLLQ (63 aa)).

It belongs to the SHANK family. As to quaternary structure, interacts (via PDZ domain) with egl-19 (via C-terminus). In terms of tissue distribution, expressed in the pharynx, pharyngeal-intestinal valve, intestine, rectal epithelial cells, tail neurons, nerve cord and sperm.

It localises to the cell projection. It is found in the pseudopodium. The protein localises to the cytoplasmic vesicle. Its subcellular location is the postsynaptic density. Scaffold protein that most likely acts in the postsynaptic density (PSD) of excitatory synapses which orchestrates synapse formation and maintenance at neuromuscular junctions. Associates with and trafficks the L-type calcium channel egl-19 to the cell surface of body wall muscles to ensure the function of the calcium channel and therefore maintain the Ca(2+) current density. The maintenance of Ca(2+) also allows for the downstream regulation of Ca(2+)-induced expression of genes such as gem-4. Plays a role in the regulation of the defecation cycle, and this may be in association with the inositol trisphosphate (IP3) receptor itr-1, which in turn mediates periodic calcium release and muscle contractions. Required for normal fertility and pharyngeal pumping. This chain is Protein shank, found in Caenorhabditis elegans.